The primary structure comprises 441 residues: tRNA modification GTPase MnmE (441 aa).

3 residues coordinate (6S)-5-formyl-5,6,7,8-tetrahydrofolate: Arg21, Glu79, and Lys118. The 154-residue stretch at 214-367 folds into the TrmE-type G domain; it reads GIHITILGAP…LVAELARVVE (154 aa). GTP is bound by residues 224 to 229, 243 to 249, and 268 to 271; these read NAGKSS, SAQAGTT, and DTAG. Mg(2+) is bound by residues Ser228 and Thr249. Lys441 is a binding site for (6S)-5-formyl-5,6,7,8-tetrahydrofolate.

This sequence belongs to the TRAFAC class TrmE-Era-EngA-EngB-Septin-like GTPase superfamily. TrmE GTPase family. In terms of assembly, homodimer. Heterotetramer of two MnmE and two MnmG subunits. K(+) is required as a cofactor.

The protein localises to the cytoplasm. In terms of biological role, exhibits a very high intrinsic GTPase hydrolysis rate. Involved in the addition of a carboxymethylaminomethyl (cmnm) group at the wobble position (U34) of certain tRNAs, forming tRNA-cmnm(5)s(2)U34. In Paramagnetospirillum magneticum (strain ATCC 700264 / AMB-1) (Magnetospirillum magneticum), this protein is tRNA modification GTPase MnmE.